Reading from the N-terminus, the 209-residue chain is Probable GTP-binding protein EngB (209 aa).

The 175-residue stretch at 24 to 198 (EGMEVAFAGR…HGILDQWLGL (175 aa)) folds into the EngB-type G domain. GTP contacts are provided by residues 32–39 (GRSNAGKS), 59–63 (GRTQL), 77–80 (DLPG), 144–147 (TKAD), and 177–179 (FSA). Mg(2+) contacts are provided by S39 and T61.

This sequence belongs to the TRAFAC class TrmE-Era-EngA-EngB-Septin-like GTPase superfamily. EngB GTPase family. Mg(2+) is required as a cofactor.

Its function is as follows. Necessary for normal cell division and for the maintenance of normal septation. The chain is Probable GTP-binding protein EngB from Thioalkalivibrio sulfidiphilus (strain HL-EbGR7).